The following is a 632-amino-acid chain: uncharacterized protein (632 aa).

A run of 4 helical transmembrane segments spans residues 255–275 (LFYA…ELRV), 506–526 (IALL…LTSI), 566–586 (MIFA…SMVF), and 603–623 (IVVI…AVLF).

It localises to the cell membrane. This is an uncharacterized protein from Mycoplasma pneumoniae (strain ATCC 29342 / M129 / Subtype 1) (Mycoplasmoides pneumoniae).